The following is a 123-amino-acid chain: MSWRYSILTVDGSFKIFIPWEIFLTWNFLSAAWLNSTESNTYIHYSTCWGTSDYTLNISVIEATTEKLVDTRLLTTLENATAWINSNSIDEDEDDMPHATNVADRLDGLSLSKRVYSICHYEF.

In terms of biological role, required for normal microtubule organization. The polypeptide is Aberrant microtubules protein 1 (ABM1) (Saccharomyces cerevisiae (strain ATCC 204508 / S288c) (Baker's yeast)).